Reading from the N-terminus, the 790-residue chain is SH3 domain-containing protein 19 (790 aa).

2 disordered regions span residues 21 to 196 and 241 to 374; these read EGQT…PVLQ and EPIK…MDLQ. Phosphoserine is present on S65. The span at 287–296 shows a compositional bias: polar residues; sequence NTFSTVSGKL. A compositionally biased stretch (pro residues) spans 336 to 351; the sequence is QQPPTKVPPERPPPPK. An interaction with SH3GL1 region spans residues 342 to 358; that stretch reads VPPERPPPPKLSATRRS. The segment covering 365-374 has biased composition (polar residues); that stretch reads NRSSSDMDLQ. Residue S369 is modified to Phosphoserine. SH3 domains are found at residues 415–477, 495–554, 571–630, 661–720, and 730–789; these read LSVP…PLDE, SGAP…VIID, VKGS…PVED, LPAE…PCPA, and PKGR…FLQI. At S762 the chain carries Phosphoserine.

Interacts with ADAM12. Isoform 4 and isoform 5 (but not isoform 1 and isoform 2) interact with ADAM9, ADAM10, ADAM15 and ADAM17. Interacts with SH3GL1 SH3 domain. Interacts via SH3 3 and SH3 4 or SH3 4 and SH3 5 domains with SOS2. Probably forms a trimeric complex with SH3GL1 and SOS2. Interacts with SH3YL1. Widely expressed with highest levels in heart, skeletal muscle, kidney, liver, placenta, small intestine and lung. Expressed at low levels in colon, thymus, spleen and leukocytes.

It is found in the cytoplasm. The protein localises to the nucleus. Functionally, may play a role in regulating A disintegrin and metalloproteases (ADAMs) in the signaling of EGFR-ligand shedding. May be involved in suppression of Ras-induced cellular transformation and Ras-mediated activation of ELK1. Plays a role in the regulation of cell morphology and cytoskeletal organization. This is SH3 domain-containing protein 19 (SH3D19) from Homo sapiens (Human).